A 445-amino-acid polypeptide reads, in one-letter code: Glucose-6-phosphate isomerase (445 aa).

Glu287 (proton donor) is an active-site residue. Active-site residues include His308 and Lys422.

This sequence belongs to the GPI family.

The protein localises to the cytoplasm. The enzyme catalyses alpha-D-glucose 6-phosphate = beta-D-fructose 6-phosphate. Its pathway is carbohydrate biosynthesis; gluconeogenesis. It participates in carbohydrate degradation; glycolysis; D-glyceraldehyde 3-phosphate and glycerone phosphate from D-glucose: step 2/4. Its function is as follows. Catalyzes the reversible isomerization of glucose-6-phosphate to fructose-6-phosphate. The protein is Glucose-6-phosphate isomerase of Bacteroides thetaiotaomicron (strain ATCC 29148 / DSM 2079 / JCM 5827 / CCUG 10774 / NCTC 10582 / VPI-5482 / E50).